The chain runs to 731 residues: T-cell activation Rho GTPase-activating protein (731 aa).

Residues 88-277 (QPLSIICGDS…FLIDNCFEIF (190 aa)) enclose the Rho-GAP domain. 3 disordered regions span residues 288 to 421 (TSDD…AEDP), 464 to 507 (SLDA…IKKH), and 641 to 662 (HHVE…GLSP). Over residues 299–311 (SDVSTLQNDSAYD) the composition is skewed to polar residues. Over residues 319–329 (SNSSSGISSPS) the composition is skewed to low complexity. Residues 380 to 399 (SMPSSQECLESRVTNQTLTK) are compositionally biased toward polar residues. At serine 400 the chain carries Phosphoserine. Positions 464–480 (SLDASSDSSPVASPSSP) are enriched in low complexity. Basic and acidic residues-rich tracts occupy residues 494–503 (KTEKGKPSRE) and 641–652 (HHVEDSRHRGSK).

Its function is as follows. May function as a GTPase-activating protein and may play important roles during T-cell activation. The chain is T-cell activation Rho GTPase-activating protein (TAGAP) from Homo sapiens (Human).